The primary structure comprises 105 residues: Small ribosomal subunit protein uS10 (105 aa).

Belongs to the universal ribosomal protein uS10 family. In terms of assembly, part of the 30S ribosomal subunit.

Functionally, involved in the binding of tRNA to the ribosomes. In Crocosphaera subtropica (strain ATCC 51142 / BH68) (Cyanothece sp. (strain ATCC 51142)), this protein is Small ribosomal subunit protein uS10.